We begin with the raw amino-acid sequence, 481 residues long: Glucan endo-1,3-beta-glucosidase 8 (481 aa).

The first 33 residues, 1-33 (MSNLLALVVGFVIVIGHLGILVNGLGVNWGTMA), serve as a signal peptide directing secretion. Asparagine 99 and asparagine 110 each carry an N-linked (GlcNAc...) asparagine glycan. Glutamate 119 (proton donor) is an active-site residue. N-linked (GlcNAc...) asparagine glycans are attached at residues asparagine 126 and asparagine 131. Glutamate 265 serves as the catalytic Nucleophile. A disulfide bridge connects residues cysteine 367 and cysteine 428. Asparagine 409 and asparagine 440 each carry an N-linked (GlcNAc...) asparagine glycan. The GPI-anchor amidated serine moiety is linked to residue serine 455. A propeptide spans 456 to 481 (SASSFSCSSYSLVVLIVWFLLSGMMF) (removed in mature form).

This sequence belongs to the glycosyl hydrolase 17 family. In terms of processing, contains two additional disulfide bonds.

Its subcellular location is the secreted. It is found in the cell wall. The protein localises to the cell membrane. It carries out the reaction Hydrolysis of (1-&gt;3)-beta-D-glucosidic linkages in (1-&gt;3)-beta-D-glucans.. The sequence is that of Glucan endo-1,3-beta-glucosidase 8 from Arabidopsis thaliana (Mouse-ear cress).